Here is a 544-residue protein sequence, read N- to C-terminus: Chaperonin GroEL (544 aa).

ATP-binding positions include 30–33, K51, 87–91, G415, 479–481, and D495; these read TLGP, DGTTT, and NAA.

The protein belongs to the chaperonin (HSP60) family. As to quaternary structure, forms a cylinder of 14 subunits composed of two heptameric rings stacked back-to-back. Interacts with the co-chaperonin GroES.

Its subcellular location is the cytoplasm. The catalysed reaction is ATP + H2O + a folded polypeptide = ADP + phosphate + an unfolded polypeptide.. Its function is as follows. Together with its co-chaperonin GroES, plays an essential role in assisting protein folding. The GroEL-GroES system forms a nano-cage that allows encapsulation of the non-native substrate proteins and provides a physical environment optimized to promote and accelerate protein folding. In Francisella tularensis subsp. mediasiatica (strain FSC147), this protein is Chaperonin GroEL.